The sequence spans 84 residues: Large ribosomal subunit protein bL27 (84 aa).

The segment at 1–25 (MAHKKAGGSSRNGRDSNGQRRGVKR) is disordered.

It belongs to the bacterial ribosomal protein bL27 family.

The chain is Large ribosomal subunit protein bL27 from Desulfatibacillum aliphaticivorans.